Here is a 75-residue protein sequence, read N- to C-terminus: Protein myomixer (75 aa).

The Cytoplasmic portion of the chain corresponds to Met1 to Phe5. The chain crosses the membrane as a helical span at residues Leu6–Leu28. At Arg29–Asn75 the chain is on the extracellular side. An AxLyCxL motif is present at residues Ala58–Leu67.

The protein belongs to the MYMX family. Specifically expressed in the developing myotome.

The protein localises to the cell membrane. Myoblast-specific protein that mediates myoblast fusion, an essential step for the formation of multi-nucleated muscle fibers. Involved in membrane fusion downstream of the lipid mixing step mediated by mymk. Acts by generating membrane stresses via its extracellular C-terminus, leading to drive fusion pore formation. In Danio rerio (Zebrafish), this protein is Protein myomixer.